We begin with the raw amino-acid sequence, 529 residues long: Bifunctional purine biosynthesis protein PurH (529 aa).

One can recognise an MGS-like domain in the interval 1 to 148; sequence MNNARPIRRA…KNHKDTTIIV (148 aa).

It belongs to the PurH family.

The enzyme catalyses (6R)-10-formyltetrahydrofolate + 5-amino-1-(5-phospho-beta-D-ribosyl)imidazole-4-carboxamide = 5-formamido-1-(5-phospho-D-ribosyl)imidazole-4-carboxamide + (6S)-5,6,7,8-tetrahydrofolate. It carries out the reaction IMP + H2O = 5-formamido-1-(5-phospho-D-ribosyl)imidazole-4-carboxamide. It participates in purine metabolism; IMP biosynthesis via de novo pathway; 5-formamido-1-(5-phospho-D-ribosyl)imidazole-4-carboxamide from 5-amino-1-(5-phospho-D-ribosyl)imidazole-4-carboxamide (10-formyl THF route): step 1/1. Its pathway is purine metabolism; IMP biosynthesis via de novo pathway; IMP from 5-formamido-1-(5-phospho-D-ribosyl)imidazole-4-carboxamide: step 1/1. This Shewanella pealeana (strain ATCC 700345 / ANG-SQ1) protein is Bifunctional purine biosynthesis protein PurH.